The following is a 264-amino-acid chain: Versicolorin reductase stcU (264 aa).

Positions 23, 69, 96, and 129 each coordinate NADP(+). Active-site proton donor residues include serine 145 and serine 146. Residues tyrosine 160, lysine 164, isoleucine 193, and threonine 195 each contribute to the NADP(+) site. The active-site Proton acceptor is tyrosine 160. Lysine 164 functions as the Lowers pKa of active site Tyr in the catalytic mechanism.

The protein belongs to the short-chain dehydrogenases/reductases (SDR) family.

The catalysed reaction is (4S,8R)-2,13,16,20-tetrahydroxy-7,9-dioxapentacyclo[10.8.0.0(3,10).0(4,8).0(14,19)]icosa-1(12),2,5,10,13,16,19-heptaen-18-one + NADPH + H(+) = (4S,8R,16R)-2,13,16,20-tetrahydroxy-7,9-dioxapentacyclo[10.8.0.0(3,10).0(4,8).0(14,19)]icosa-1(12),2,5,10,13,19-hexaen-18-one + NADP(+). It participates in mycotoxin biosynthesis; sterigmatocystin biosynthesis. In terms of biological role, versicolorin reductase; part of the gene cluster that mediates the biosynthesis of sterigmatocystin (ST), a polyketide-derived furanocoumarin which is part of the most toxic and carcinogenic compounds among the known mycotoxins. The first step in the biosynthesis of sterigmatocystin is the production of hexanoate by the fatty acid synthase (FAS) units stcJ and stcK. The polyketide backbone is assembled by the non-reducing polyketide synthase stcA by condensation of the starter hexanoyl-CoA and 7 malonyl-CoA extender units followed by cyclization and release of norsolorinic acid. Norsolorinic acid is the first stable intermediate in the biosynthesis of sterigmatocystin and is converted into averantin (AVN) by the ketoreductase stcE which reduces the hexanoate ketone to an alcohol. Averantin is then oxidized into 5'-hydroxyaverantin (HAVN) by the cytochrome P450 monooxygenase stcF. 5'-hydroxyaverantin is further converted to 5'-oxyaverantin (OAVN) by the 5'-hydroxyaverantin dehydrogenase stcG. The next step is the conversion of OAVN into averufin (AVF) which is catalyzed by a yet to be identified enzyme. The cytochrome P450 monooxygenase stcB and the flavin-binding monooxygenase stcW are both required for the conversion of averufin to 1-hydroxyversicolorone. The esterase stcI probably catalyzes the formation of versiconal hemiacetal acetate from 1-hydroxyversicolorone. The oxydoreductase stcN then probably catalyzes the biosynthetic step from versiconal to versicolorin B (VERB). The next step is performed by the versicolorin B desaturase stcL to produce versicolorin A (VERA). The ketoreductase stcU and the cytochrome P450 monooxygenase stcS are involved in the conversion of versicolorin A to demethylsterigmatocystin. The Baeyer-Villiger oxidas stcQ and the reductase stcR might be involved in the biosynthetic step from versicolorin A to demethylsterigmatocystin. The final step in the biosynthesis of sterigmatocystin is the methylation of demethylsterigmatocystin catalyzed by the methyltransferase stcP. This chain is Versicolorin reductase stcU, found in Emericella nidulans (strain FGSC A4 / ATCC 38163 / CBS 112.46 / NRRL 194 / M139) (Aspergillus nidulans).